The chain runs to 475 residues: Amino acid permease 8 (475 aa).

Positions 1–22 are disordered; it reads MDAYNNPSAVESGDAAVKSVDD. Topologically, residues 1 to 31 are cytoplasmic; sequence MDAYNNPSAVESGDAAVKSVDDDGREKRTGT. Helical transmembrane passes span 32-52 and 53-73; these read FWTA…LSLA and WAIA…FAII. The Cytoplasmic segment spans residues 74 to 120; it reads TYYTSTLLADCYRSPDSITGTRNYNYMGVVRSYLGGKKVQLCGVAQY. The chain crosses the membrane as a helical span at residues 121–141; the sequence is VNLVGVTIGYTITASISLVAI. Over 142–157 the chain is Extracellular; that stretch reads GKSNCYHDKGHKAKCS. A helical transmembrane segment spans residues 158-178; it reads VSNYPYMAAFGIVQIILSQLP. At 179–185 the chain is on the cytoplasmic side; that stretch reads NFHKLSF. A helical transmembrane segment spans residues 186–206; the sequence is LSIIAAVMSFSYASIGIGLAI. The Extracellular segment spans residues 207–236; sequence ATVASGKIGKTELTGTVIGVDVTASEKVWK. The chain crosses the membrane as a helical span at residues 237 to 257; sequence LFQAIGDIAFSYAFTTILIEI. Residues 258–276 lie on the Cytoplasmic side of the membrane; it reads QDTLRSSPPENKVMKRASL. The chain crosses the membrane as a helical span at residues 277-297; it reads VGVSTTTVFYILCGCIGYAAF. The Extracellular portion of the chain corresponds to 298–314; it reads GNQAPGDFLTDFGFYEP. Residues 315-335 traverse the membrane as a helical segment; it reads YWLIDFANACIALHLIGAYQV. At 336–378 the chain is on the cytoplasmic side; it reads YAQPFFQFVEENCNKKWPQSNFINKEYSSKVPLLGKCRVNLFR. Residues 379–398 traverse the membrane as a helical segment; that stretch reads LVWRTCYVVLTTFVAMIFPF. Over 399-401 the chain is Extracellular; the sequence is FNA. Residues 402 to 424 traverse the membrane as a helical segment; the sequence is ILGLLGAFAFWPLTVYFPVAMHI. Over 425–441 the chain is Cytoplasmic; it reads AQAKVKKYSRRWLALNL. Residues 442 to 462 form a helical membrane-spanning segment; sequence LVLVCLIVSALAAVGSIIGLI. Residues 463–475 lie on the Extracellular side of the membrane; sequence NSVKSYKPFKNLD.

The protein belongs to the amino acid/polyamine transporter 2 family. Amino acid/auxin permease (AAAP) (TC 2.A.18.2) subfamily. Expressed in flower buds, siliques, developing seeds and funiculi.

It localises to the cell membrane. In terms of biological role, amino acid-proton symporter. Stereospecific transporter with a broad specificity for glutamate, aspartate and neutral and acidic amino acids. The polypeptide is Amino acid permease 8 (AAP8) (Arabidopsis thaliana (Mouse-ear cress)).